The following is a 597-amino-acid chain: Arginine--tRNA ligase (597 aa).

The short motif at 125-135 (PNTNKPLHLGH) is the 'HIGH' region element.

This sequence belongs to the class-I aminoacyl-tRNA synthetase family. Monomer.

The protein resides in the cytoplasm. It carries out the reaction tRNA(Arg) + L-arginine + ATP = L-arginyl-tRNA(Arg) + AMP + diphosphate. The chain is Arginine--tRNA ligase from Porphyromonas gingivalis (strain ATCC BAA-308 / W83).